The sequence spans 670 residues: Putative segment polarity protein dishevelled homolog DVL1P1 (670 aa).

The region spanning 1–85 is the DIX domain; the sequence is MAETKIIYHM…RVVSWLVLVE (85 aa). Positions 89-240 are disordered; it reads SDAGSQGTDS…ADRASSFSSM (152 aa). Basic residues predominate over residues 142–151; sequence SHRRDRARRR. The span at 152–171 shows a compositional bias: basic and acidic residues; it reads NREEAARTNGHPRGDRRRDV. Composition is skewed to low complexity over residues 176-192 and 201-214; these read DSASTALSSELESSSFV and SRLSSSTEQSTSSR. Positions 215–228 are enriched in basic residues; it reads LIRKHKRRRRKQRL. Residues 251–323 enclose the PDZ domain; sequence TVTLNMERHH…NDDAVRVLRE (73 aa). The DEP domain maps to 400 to 474; sequence PDSGLEIRDR…SEQCYYVFGD (75 aa). The segment at 518-642 is disordered; the sequence is PGPPPCFPPA…PGGPPVRELA (125 aa). 2 stretches are compositionally biased toward low complexity: residues 526–553 and 600–614; these read PAYQDPGFSYGSGSTGSQQSEGSKSSGS and SRGSSPRSQASSYAP.

This sequence belongs to the DSH family. Expressed in thymus, heart, liver, kidney, brain, skeletal muscle, and pancreas.

The protein resides in the cytoplasm. May play a role in the signal transduction pathway mediated by multiple Wnt genes. In Homo sapiens (Human), this protein is Putative segment polarity protein dishevelled homolog DVL1P1 (DVL1P1).